Here is a 68-residue protein sequence, read N- to C-terminus: Conotoxin VnMMSK-01 (68 aa).

Residues Met-1–Ala-20 form the signal peptide. A propeptide spanning residues Val-21–Val-50 is cleaved from the precursor. 3 disulfide bridges follow: Cys-53–Cys-65, Cys-54–Cys-61, and Cys-58–Cys-64. Pro-63 is modified (4-hydroxyproline).

This sequence belongs to the conotoxin M superfamily. As to expression, expressed by the venom duct.

The protein localises to the secreted. In Conus ventricosus (Mediterranean cone), this protein is Conotoxin VnMMSK-01.